We begin with the raw amino-acid sequence, 288 residues long: Glucose uptake protein GlcU (288 aa).

The next 10 helical transmembrane spans lie at 4–26, 33–51, 56–75, 82–104, 114–136, 148–170, 180–197, 206–225, 230–252, and 264–283; these read LIAL…VGGG, GTTF…TGNA, LTII…GQGY, LIGV…TLFS, GVQV…LTSI, NFGK…VVVA, ALFF…ILSA, TLWN…FMFY, VGVA…GGIF, and IGIW…SEIL.

This sequence belongs to the GRP transporter (TC 2.A.7.5) family.

Its subcellular location is the cell membrane. Functionally, involved in the uptake of glucose. This chain is Glucose uptake protein GlcU (glcU), found in Staphylococcus xylosus.